The following is a 532-amino-acid chain: 2,3-bisphosphoglycerate-independent phosphoglycerate mutase (532 aa).

Mn(2+) contacts are provided by aspartate 15 and serine 65. The active-site Phosphoserine intermediate is the serine 65. Substrate-binding positions include histidine 126, 156-157 (RD), arginine 188, arginine 194, 258-261 (RPDR), and lysine 331. Aspartate 398, histidine 402, aspartate 439, histidine 440, and histidine 457 together coordinate Mn(2+).

Belongs to the BPG-independent phosphoglycerate mutase family. Monomer. Mn(2+) is required as a cofactor.

It catalyses the reaction (2R)-2-phosphoglycerate = (2R)-3-phosphoglycerate. It participates in carbohydrate degradation; glycolysis; pyruvate from D-glyceraldehyde 3-phosphate: step 3/5. Functionally, catalyzes the interconversion of 2-phosphoglycerate and 3-phosphoglycerate. The sequence is that of 2,3-bisphosphoglycerate-independent phosphoglycerate mutase from Nostoc punctiforme (strain ATCC 29133 / PCC 73102).